Here is a 1039-residue protein sequence, read N- to C-terminus: MPSARPGSLKDPEIADLFNKHDPEKIFEDLREIGHGSFGAVYYARCNLTREIVAIKKMSYTGKQSQEKWQDILKEIRFLRQLNHPNTIEYKGCYLRESTAWLVMEYCVGSASDIIEVHKKPLHEDEIAAICLGVLSGLSYLHSLGRIHRDIKAGNILLTDNGVVKLADFGSAAIKCPANSFVGTPYWMAPEVILAMDEGQYDGKVDVWSLGITCIELAERKPPYFNMNAMSALYHIAQNESPTLPKNDWSDAFCSFVELCLKKMPAERPSSAKLLTHAYVTRPRSDTVLLELIARTKSAVRELDNLNYRKMKKILMVDTCETESAVGDTDDQQDDHAGGDSSKSNSITSEHSIHSVGVSAASSQSSSSNSIPAAAQNHHHIAAHHHQQAASAAVAAAMHHHHHPHQQPPPSWPSGQQGQPVPPGAVSRNSSRHRNRPPLPNIMHSMNNNVTPTNSASVVPAPAPAPVLPPPISVLPHLSAMGHVGGGGTGTGGSGGGSPASGGPLADRIQPVQPRYLTTPAAQAAVYAASSASSQQAISNAVNDHGPNNFATIRTTSIVTKQQKEHMQEEMHEQMSGYKRMRREHQAHLVKLEEKCKVDMEAHKTALDKEYDTLLHNFTRDLDRLETKHQQDVERRAKQTSAAEKKLHKEITLKQENDRKVYDLNRKKEYKANKERWKRELSMDESTPKRQRDLTLQSQKDNLKQHEAQEEQRMLQAQKQYIELEMRKFKRKRMIMQHEHEDQQLRDELGKKEQQLQQAHAMLLKHHEKTQELEYRQQKSVHQLREEQINKQHDTELHNQKDYMDRIKKELVRKHAVELRQQPKSLKQKELQIRKQFRETCKTQTKQYKRYKAQVLQTTPKEQQKEVIKQLKEEKHRKLTLLGEQYEQSIADMFQSQSYKLDESQVIECQRTHEQLEYELEMLTAYQNKNKKQAQEQRDRERRELENRVSVRRGLLENKMDAELQQFNQERAERLRMKHEKHTKELEAFDNESIALGFSTLSLIEVSREAYADEEGSLSGSMISLAHSNSSTSFPAGSL.

Positions 27-280 constitute a Protein kinase domain; sequence FEDLREIGHG…SAKLLTHAYV (254 aa). ATP-binding positions include 33–41 and K56; that span reads IGHGSFGAV. The active-site Proton acceptor is D150. Disordered regions lie at residues 324–457, 485–508, 629–648, and 677–707; these read SAVG…NSAS, GGGGTGTGGSGGGSPASGGPLADR, HQQDVERRAKQTSAAEKKLH, and WKRELSMDESTPKRQRDLTLQSQKDNLKQHE. Positions 341 to 350 are enriched in polar residues; it reads SSKSNSITSE. Residues 359 to 376 are compositionally biased toward low complexity; the sequence is SAASSQSSSSNSIPAAAQ. The segment covering 377 to 387 has biased composition (basic residues); sequence NHHHIAAHHHQ. 2 stretches are compositionally biased toward low complexity: residues 388–397 and 413–429; these read QAASAAVAAA and PSGQQGQPVPPGAVSRN. A compositionally biased stretch (polar residues) spans 444-454; that stretch reads HSMNNNVTPTN. Over residues 485–500 the composition is skewed to gly residues; sequence GGGGTGTGGSGGGSPA. Coiled coils occupy residues 631-765 and 835-993; these read QDVE…MLLK and KQFR…DNES. Residues 677 to 693 show a composition bias toward basic and acidic residues; it reads WKRELSMDESTPKRQRD.

Belongs to the protein kinase superfamily. STE Ser/Thr protein kinase family. STE20 subfamily. In terms of assembly, interacts with Schip1; the interaction enhances Tao kinase activity. It depends on Mg(2+) as a cofactor. Post-translationally, autophosphorylated. In terms of tissue distribution, in the posterior midgut, expressed in almost all intestinal cell types including intestinal stem cells and enterocytes (at protein level). Maternally expressed, ubiquitously distributed in the egg and early embryo and enriched in the germ plasm at the posterior pole of the early embryo including the pole cells.

The protein localises to the cytoplasm. It is found in the cytoskeleton. The protein resides in the spindle. It localises to the membrane. Its subcellular location is the perikaryon. The protein localises to the cell cortex. It is found in the cell projection. The protein resides in the axon. It catalyses the reaction L-seryl-[protein] + ATP = O-phospho-L-seryl-[protein] + ADP + H(+). The enzyme catalyses L-threonyl-[protein] + ATP = O-phospho-L-threonyl-[protein] + ADP + H(+). Its function is as follows. Serine/threonine-protein kinase which regulates the Hippo/SWH (Sav/Wts/Hpo) signaling pathway, a signaling pathway that plays a pivotal role in organ size control and tumor suppression by restricting proliferation and promoting apoptosis. The core of this pathway is composed of a kinase cascade wherein Hippo (hpo), in complex with its regulatory protein Salvador (sav), phosphorylates and activates Warts (wts) in complex with its regulatory protein Mats, which in turn phosphorylates and inactivates the Yorkie (yki) oncoprotein. In imaginal cells, phosphorylates and activates hpo and leads to repression of yki. In the midgut, negatively regulates the proliferation of intestinal stem cells through the Hippo/SWH pathway. Independent of the hippo/SWH pathway, regulates epithelial morphogenesis in follicle cells by promoting the endocytosis of Fas2 and reducing lateral adhesion between epithelial cells which, in turn, permits shrinking of the lateral membrane and initiates morphogenesis of the squamous epithelium. Required for the development of both the mushroom body and the ellipsoid body in the brain and may act as a negative regulator of the par-1 kinase. Negatively regulates the JNK pathway which increases sensitivity to ethanol exposure. Plays a role in the control of cell shape by negatively regulating the growth of microtubule plus-ends as they contact the actin-rich cell cortex. Required for the induction of apoptosis in pole cells by promoting expression of skl which enhances activity of the apoptosis activator hid. Induces in vitro expression of large, highly dynamic, microtubule-dependent lamellopodia-like cytoplasmic expansions which constantly probe the environment. In terms of biological role, induces in vitro expression of actin-dependent filopodia-like cytoplasmic protrusions which firmly attach to the substrate. Antagonizes the activity of isoform D. The protein is Serine/threonine-protein kinase Tao of Drosophila melanogaster (Fruit fly).